We begin with the raw amino-acid sequence, 182 residues long: Adenine phosphoribosyltransferase (182 aa).

Belongs to the purine/pyrimidine phosphoribosyltransferase family. As to quaternary structure, homodimer.

The protein resides in the cytoplasm. It carries out the reaction AMP + diphosphate = 5-phospho-alpha-D-ribose 1-diphosphate + adenine. The protein operates within purine metabolism; AMP biosynthesis via salvage pathway; AMP from adenine: step 1/1. Catalyzes a salvage reaction resulting in the formation of AMP, that is energically less costly than de novo synthesis. The polypeptide is Adenine phosphoribosyltransferase (Pseudomonas syringae pv. tomato (strain ATCC BAA-871 / DC3000)).